A 362-amino-acid chain; its full sequence is Glutamate 5-kinase (362 aa).

K3 is a binding site for ATP. Substrate is bound by residues S43, D128, and N140. Residues 160 to 161 (TD) and 202 to 208 (TGGMRTK) each bind ATP. Positions 267-348 (AGAILVDAGA…RDIENVLGYS (82 aa)) constitute a PUA domain.

Belongs to the glutamate 5-kinase family.

Its subcellular location is the cytoplasm. The enzyme catalyses L-glutamate + ATP = L-glutamyl 5-phosphate + ADP. It participates in amino-acid biosynthesis; L-proline biosynthesis; L-glutamate 5-semialdehyde from L-glutamate: step 1/2. Catalyzes the transfer of a phosphate group to glutamate to form L-glutamate 5-phosphate. In Xanthomonas oryzae pv. oryzae (strain MAFF 311018), this protein is Glutamate 5-kinase.